Here is a 77-residue protein sequence, read N- to C-terminus: Protein RALF-like 17 (77 aa).

The signal sequence occupies residues 1-29 (MAASREFIICCFLTLLLCNFFMRVESGAA). Cys37 and Cys51 are disulfide-bonded.

This sequence belongs to the plant rapid alkalinization factor (RALF) family.

Its subcellular location is the secreted. In terms of biological role, cell signaling peptide that may regulate plant stress, growth, and development. Mediates a rapid alkalinization of extracellular space by mediating a transient increase in the cytoplasmic Ca(2+) concentration leading to a calcium-dependent signaling events through a cell surface receptor and a concomitant activation of some intracellular mitogen-activated protein kinases. The polypeptide is Protein RALF-like 17 (RALFL17) (Arabidopsis thaliana (Mouse-ear cress)).